A 565-amino-acid chain; its full sequence is Phosphomethylpyrimidine synthase (565 aa).

Substrate is bound by residues Asn-203, Met-232, Tyr-261, His-297, 317 to 319, 358 to 361, and Glu-397; these read SRG and DGLR. Residue His-401 coordinates Zn(2+). Tyr-424 is a binding site for substrate. His-465 provides a ligand contact to Zn(2+). [4Fe-4S] cluster contacts are provided by Cys-541, Cys-544, and Cys-549.

This sequence belongs to the ThiC family. It depends on [4Fe-4S] cluster as a cofactor.

It catalyses the reaction 5-amino-1-(5-phospho-beta-D-ribosyl)imidazole + S-adenosyl-L-methionine = 4-amino-2-methyl-5-(phosphooxymethyl)pyrimidine + CO + 5'-deoxyadenosine + formate + L-methionine + 3 H(+). The protein operates within cofactor biosynthesis; thiamine diphosphate biosynthesis. In terms of biological role, catalyzes the synthesis of the hydroxymethylpyrimidine phosphate (HMP-P) moiety of thiamine from aminoimidazole ribotide (AIR) in a radical S-adenosyl-L-methionine (SAM)-dependent reaction. This Bacteroides thetaiotaomicron (strain ATCC 29148 / DSM 2079 / JCM 5827 / CCUG 10774 / NCTC 10582 / VPI-5482 / E50) protein is Phosphomethylpyrimidine synthase.